Consider the following 710-residue polypeptide: Polyribonucleotide nucleotidyltransferase (710 aa).

The Mg(2+) site is built by D489 and D495. The 60-residue stretch at 556-615 (PKIDTIKIDVDKIKVVIGKGGETIDKIIAETGVKIDIDDEGNVSIYSSDQAAINRTKEII) folds into the KH domain. In terms of domain architecture, S1 motif spans 625 to 693 (GEVYHAKVVR…EKGRVDASMK (69 aa)). Residues 691 to 710 (SMKALIPRPPKPEKKEEKHD) form a disordered region. Over residues 700 to 710 (PKPEKKEEKHD) the composition is skewed to basic and acidic residues.

It belongs to the polyribonucleotide nucleotidyltransferase family. Mg(2+) is required as a cofactor.

The protein resides in the cytoplasm. It carries out the reaction RNA(n+1) + phosphate = RNA(n) + a ribonucleoside 5'-diphosphate. In terms of biological role, involved in mRNA degradation. Catalyzes the phosphorolysis of single-stranded polyribonucleotides processively in the 3'- to 5'-direction. The chain is Polyribonucleotide nucleotidyltransferase from Streptococcus pyogenes serotype M2 (strain MGAS10270).